The following is a 428-amino-acid chain: Kynureninase (428 aa).

Pyridoxal 5'-phosphate is bound by residues Thr104, Thr105, 132–135 (FPSD), Asp213, His216, and Tyr238. At Lys239 the chain carries N6-(pyridoxal phosphate)lysine. Positions 267 and 295 each coordinate pyridoxal 5'-phosphate.

Belongs to the kynureninase family. Homodimer. Pyridoxal 5'-phosphate is required as a cofactor.

The catalysed reaction is L-kynurenine + H2O = anthranilate + L-alanine + H(+). The enzyme catalyses 3-hydroxy-L-kynurenine + H2O = 3-hydroxyanthranilate + L-alanine + H(+). It functions in the pathway amino-acid degradation; L-kynurenine degradation; L-alanine and anthranilate from L-kynurenine: step 1/1. It participates in cofactor biosynthesis; NAD(+) biosynthesis; quinolinate from L-kynurenine: step 2/3. In terms of biological role, catalyzes the cleavage of L-kynurenine (L-Kyn) and L-3-hydroxykynurenine (L-3OHKyn) into anthranilic acid (AA) and 3-hydroxyanthranilic acid (3-OHAA), respectively. This is Kynureninase from Bacillus cereus (strain ATCC 14579 / DSM 31 / CCUG 7414 / JCM 2152 / NBRC 15305 / NCIMB 9373 / NCTC 2599 / NRRL B-3711).